The primary structure comprises 570 residues: Proline--tRNA ligase (570 aa).

Belongs to the class-II aminoacyl-tRNA synthetase family. ProS type 1 subfamily. As to quaternary structure, homodimer.

Its subcellular location is the cytoplasm. It catalyses the reaction tRNA(Pro) + L-proline + ATP = L-prolyl-tRNA(Pro) + AMP + diphosphate. Functionally, catalyzes the attachment of proline to tRNA(Pro) in a two-step reaction: proline is first activated by ATP to form Pro-AMP and then transferred to the acceptor end of tRNA(Pro). As ProRS can inadvertently accommodate and process non-cognate amino acids such as alanine and cysteine, to avoid such errors it has two additional distinct editing activities against alanine. One activity is designated as 'pretransfer' editing and involves the tRNA(Pro)-independent hydrolysis of activated Ala-AMP. The other activity is designated 'posttransfer' editing and involves deacylation of mischarged Ala-tRNA(Pro). The misacylated Cys-tRNA(Pro) is not edited by ProRS. The chain is Proline--tRNA ligase from Shewanella sp. (strain MR-7).